A 216-amino-acid polypeptide reads, in one-letter code: MNLILMGLPGAGKGTQAEQIVAKYNIPHISTGDMFRAAMKAETEMGLQAKSFIDKGALVPDEVTIGIVRERLSQDDCVRGFLLDGFPRTVAQASALEEIMKDLGKKIDYVLNINVDSGLLLKRLTGRRICKECGATYHLEFNPPAKADVCDKCGGELYQRSDDNEETVANRLDVNIKQTKPLLDFYEELGYLQSINGEQDINKVFADIDVLIGGLA.

10 to 15 (GAGKGT) provides a ligand contact to ATP. The tract at residues 30–59 (STGDMFRAAMKAETEMGLQAKSFIDKGALV) is NMP. Residues T31, R36, 57–59 (ALV), 85–88 (GFPR), and Q92 contribute to the AMP site. Residues 126–163 (GRRICKECGATYHLEFNPPAKADVCDKCGGELYQRSDD) are LID. R127 serves as a coordination point for ATP. Positions 130 and 133 each coordinate Zn(2+). 136–137 (TY) lines the ATP pocket. The Zn(2+) site is built by C150 and C153. Residues R160 and R171 each coordinate AMP. Residue Q199 participates in ATP binding.

It belongs to the adenylate kinase family. Monomer.

The protein resides in the cytoplasm. It carries out the reaction AMP + ATP = 2 ADP. It functions in the pathway purine metabolism; AMP biosynthesis via salvage pathway; AMP from ADP: step 1/1. Functionally, catalyzes the reversible transfer of the terminal phosphate group between ATP and AMP. Plays an important role in cellular energy homeostasis and in adenine nucleotide metabolism. The chain is Adenylate kinase from Bacillus cereus (strain B4264).